Here is a 458-residue protein sequence, read N- to C-terminus: Kelch repeat and BTB domain-containing protein 13 (458 aa).

The BTB domain maps to V7 to A74. Kelch repeat units follow at residues A159–N209, K210–G258, R259–G305, L307–R350, and S352–G400.

Component of the BCR(KBTBD13) E3 ubiquitin ligase complex, at least composed of CUL3 and KBTBD13 and RBX1. Interacts with CUL3. Post-translationally, autoubiquitinated. As to expression, expressed in skeletal muscle, heart and lung.

The protein resides in the cytoplasm. The protein operates within protein modification; protein ubiquitination. In terms of biological role, substrate-specific adapter of a BCR (BTB-CUL3-RBX1) E3 ubiquitin ligase complex. In Mus musculus (Mouse), this protein is Kelch repeat and BTB domain-containing protein 13 (Kbtbd13).